Consider the following 335-residue polypeptide: Transaldolase (335 aa).

The active-site Schiff-base intermediate with substrate is K135.

Belongs to the transaldolase family. Type 1 subfamily. Homodimer.

The protein localises to the cytoplasm. The catalysed reaction is D-sedoheptulose 7-phosphate + D-glyceraldehyde 3-phosphate = D-erythrose 4-phosphate + beta-D-fructose 6-phosphate. It functions in the pathway carbohydrate degradation; pentose phosphate pathway; D-glyceraldehyde 3-phosphate and beta-D-fructose 6-phosphate from D-ribose 5-phosphate and D-xylulose 5-phosphate (non-oxidative stage): step 2/3. Its function is as follows. Transaldolase is important for the balance of metabolites in the pentose-phosphate pathway. The protein is Transaldolase of Prochlorococcus marinus (strain SARG / CCMP1375 / SS120).